Reading from the N-terminus, the 602-residue chain is Probable pectinesterase/pectinesterase inhibitor 64 (602 aa).

The helical transmembrane segment at 36-56 (ILIIIAASCILLLLISLLIYA) threads the bilayer. Residues 62-91 (SRNHHNPSHQTPTSDDHPPPETPPSPPPIA) are disordered. A compositionally biased stretch (pro residues) spans 81–90 (PETPPSPPPI). A pectinesterase inhibitor 64 region spans residues 87 to 237 (PPPIAQIRLA…VNLTGNALSM (151 aa)). N-linked (GlcNAc...) asparagine glycosylation is found at Asn98, Asn156, Asn212, Asn229, and Asn315. Positions 288–595 (DVTVCKNGGK…YSVANFIQAD (308 aa)) are pectinesterase 64. Positions 367 and 397 each coordinate substrate. The active-site Proton donor; for pectinesterase activity is the Asp420. An intrachain disulfide couples Cys434 to Cys454. The Nucleophile; for pectinesterase activity role is filled by Asp441. 2 N-linked (GlcNAc...) asparagine glycosylation sites follow: Asn492 and Asn496. Residues Arg518 and Trp520 each contribute to the substrate site.

The protein in the N-terminal section; belongs to the PMEI family. In the C-terminal section; belongs to the pectinesterase family. As to expression, expressed in siliques.

Its subcellular location is the membrane. It catalyses the reaction [(1-&gt;4)-alpha-D-galacturonosyl methyl ester](n) + n H2O = [(1-&gt;4)-alpha-D-galacturonosyl](n) + n methanol + n H(+). The protein operates within glycan metabolism; pectin degradation; 2-dehydro-3-deoxy-D-gluconate from pectin: step 1/5. Acts in the modification of cell walls via demethylesterification of cell wall pectin. The polypeptide is Probable pectinesterase/pectinesterase inhibitor 64 (PME64) (Arabidopsis thaliana (Mouse-ear cress)).